The chain runs to 434 residues: Protein trichome birefringence-like 3 (434 aa).

The helical; Signal-anchor for type II membrane protein transmembrane segment at 15–35 threads the bilayer; it reads IPLSIIVLVLCGFMFFILLYT. Residues 166–168 carry the GDS motif motif; sequence GDS. Positions 413-427 match the DCXHWCLPGXXDXWN motif motif; it reads DCIHWCLPGLPDTWN.

Belongs to the PC-esterase family. TBL subfamily.

The protein resides in the golgi apparatus membrane. Involved in secondary cell wall cellulose deposition. Required for normal stem development. May act as a bridging protein that binds pectin and other cell wall polysaccharides. Probably involved in maintaining esterification of pectins. May be involved in the specific O-acetylation of cell wall polymers. The protein is Protein trichome birefringence-like 3 (TBL3) of Arabidopsis thaliana (Mouse-ear cress).